We begin with the raw amino-acid sequence, 86 residues long: Omega-theraphotoxin-Hhn1e (86 aa).

The N-terminal stretch at 1 to 21 (MKSIVFVALFGLALLAVVCSA) is a signal peptide. Positions 22–50 (SEGAHKELLKEVVRAMVVDKTDAVQAEER) are excised as a propeptide. Disulfide bonds link cysteine 52/cysteine 66 and cysteine 65/cysteine 78.

The protein belongs to the neurotoxin 10 (Hwtx-1) family. 17 (Hntx-9) subfamily. Expressed by the venom gland.

It localises to the secreted. In terms of biological role, ion channel inhibitor. The protein is Omega-theraphotoxin-Hhn1e of Cyriopagopus hainanus (Chinese bird spider).